The primary structure comprises 491 residues: GTPase Der (491 aa).

Residues alanine 3–aspartate 178 form the EngA-type G 1 domain. Residues glycine 9 to serine 16, aspartate 57 to isoleucine 61, and asparagine 130 to aspartate 133 each bind GTP. Positions aspartate 198–glutamate 224 are enriched in acidic residues. A disordered region spans residues aspartate 198–alanine 225. The 174-residue stretch at leucine 227–serine 400 folds into the EngA-type G 2 domain. GTP is bound by residues glycine 233–serine 240, aspartate 280–valine 284, and asparagine 345–aspartate 348. The KH-like domain maps to valine 401 to histidine 485.

It belongs to the TRAFAC class TrmE-Era-EngA-EngB-Septin-like GTPase superfamily. EngA (Der) GTPase family. As to quaternary structure, associates with the 50S ribosomal subunit.

Its function is as follows. GTPase that plays an essential role in the late steps of ribosome biogenesis. The sequence is that of GTPase Der from Nitratidesulfovibrio vulgaris (strain ATCC 29579 / DSM 644 / CCUG 34227 / NCIMB 8303 / VKM B-1760 / Hildenborough) (Desulfovibrio vulgaris).